A 613-amino-acid chain; its full sequence is V-type proton ATPase catalytic subunit A isoform 1 (613 aa).

240-247 provides a ligand contact to ATP; sequence GAFGCGKT.

It belongs to the ATPase alpha/beta chains family. In terms of assembly, V-ATPase is a heteromultimeric enzyme composed of a peripheral catalytic V1 complex (main components: subunits A, B, C, D, E, and F) attached to an integral membrane V0 proton pore complex (main component: the proteolipid protein).

The enzyme catalyses ATP + H2O + 4 H(+)(in) = ADP + phosphate + 5 H(+)(out). Functionally, catalytic subunit of the peripheral V1 complex of vacuolar ATPase. V-ATPase vacuolar ATPase is responsible for acidifying a variety of intracellular compartments in eukaryotic cells. In Acetabularia acetabulum (Mermaid's wine glass), this protein is V-type proton ATPase catalytic subunit A isoform 1.